A 339-amino-acid chain; its full sequence is Dihydroorotate dehydrogenase (quinone) (339 aa).

Residues 62–66 (AGMDK) and Thr-86 contribute to the FMN site. Lys-66 provides a ligand contact to substrate. A substrate-binding site is contributed by 111–115 (NRMGF). Residues Asn-139 and Asn-172 each coordinate FMN. Residue Asn-172 participates in substrate binding. Ser-175 acts as the Nucleophile in catalysis. Asn-177 lines the substrate pocket. Residues Lys-217 and Thr-245 each contribute to the FMN site. 246-247 (NT) lines the substrate pocket. FMN-binding positions include Gly-268, Gly-297, and 318–319 (YS).

The protein belongs to the dihydroorotate dehydrogenase family. Type 2 subfamily. As to quaternary structure, monomer. It depends on FMN as a cofactor.

The protein resides in the cell membrane. It carries out the reaction (S)-dihydroorotate + a quinone = orotate + a quinol. The protein operates within pyrimidine metabolism; UMP biosynthesis via de novo pathway; orotate from (S)-dihydroorotate (quinone route): step 1/1. Functionally, catalyzes the conversion of dihydroorotate to orotate with quinone as electron acceptor. This chain is Dihydroorotate dehydrogenase (quinone), found in Shewanella sp. (strain ANA-3).